The following is a 320-amino-acid chain: ATP-dependent 6-phosphofructokinase (320 aa).

Glycine 12 contacts ATP. An ADP-binding site is contributed by 22–26 (RGVVR). ATP-binding positions include 73 to 74 (RF) and 103 to 106 (GDGS). Aspartate 104 contributes to the Mg(2+) binding site. Position 126–128 (126–128 (TID)) interacts with substrate. The Proton acceptor role is filled by aspartate 128. Arginine 155 lines the ADP pocket. Substrate-binding positions include arginine 163 and 170–172 (MGR). Residues 186 to 188 (GCE), lysine 212, and 214 to 216 (KKH) contribute to the ADP site. Residues glutamate 223, arginine 244, and 250–253 (HIQR) each bind substrate.

This sequence belongs to the phosphofructokinase type A (PFKA) family. ATP-dependent PFK group I subfamily. Prokaryotic clade 'B1' sub-subfamily. Homotetramer. Requires Mg(2+) as cofactor.

It localises to the cytoplasm. It carries out the reaction beta-D-fructose 6-phosphate + ATP = beta-D-fructose 1,6-bisphosphate + ADP + H(+). The protein operates within carbohydrate degradation; glycolysis; D-glyceraldehyde 3-phosphate and glycerone phosphate from D-glucose: step 3/4. With respect to regulation, allosterically activated by ADP and other diphosphonucleosides, and allosterically inhibited by phosphoenolpyruvate. Its function is as follows. Catalyzes the phosphorylation of D-fructose 6-phosphate to fructose 1,6-bisphosphate by ATP, the first committing step of glycolysis. The sequence is that of ATP-dependent 6-phosphofructokinase from Aliivibrio fischeri (strain ATCC 700601 / ES114) (Vibrio fischeri).